The sequence spans 149 residues: Large ribosomal subunit protein bL9 (149 aa).

Belongs to the bacterial ribosomal protein bL9 family.

Functionally, binds to the 23S rRNA. The protein is Large ribosomal subunit protein bL9 of Rubrobacter xylanophilus (strain DSM 9941 / JCM 11954 / NBRC 16129 / PRD-1).